We begin with the raw amino-acid sequence, 705 residues long: Polyribonucleotide nucleotidyltransferase (705 aa).

2 residues coordinate Mg(2+): aspartate 485 and aspartate 491. The region spanning 552-611 (PKVFTMSINPSKIKDVIGAGGKTINKIIDETGVKIDIKEDGSVFVTAEDYESGKKALAMI) is the KH domain. Positions 621–689 (GEVYLGKVTK…SMGRVNLSRK (69 aa)) constitute an S1 motif domain.

This sequence belongs to the polyribonucleotide nucleotidyltransferase family. Mg(2+) is required as a cofactor.

Its subcellular location is the cytoplasm. The enzyme catalyses RNA(n+1) + phosphate = RNA(n) + a ribonucleoside 5'-diphosphate. Involved in mRNA degradation. Catalyzes the phosphorolysis of single-stranded polyribonucleotides processively in the 3'- to 5'-direction. This chain is Polyribonucleotide nucleotidyltransferase, found in Clostridium novyi (strain NT).